A 539-amino-acid chain; its full sequence is MYGGDEYATNSEYYDDYAHTGDPQLDMEYERNYYAARMPDNVKYFLINFCQAIKEGNLYDIQNMYENTFPQISDHHFDKTAWPEEQEVAAIVDNDKVFLILYKELYYRHIHARIPGGPKLEQRINSFFNYCDFFNLIISAQNPVMLELPDIWLWELVDEFVYQFQNFAQYRARLTEKSQDEIQQLCVNHSNEWSILCILNVLHSLVDISNIKKQLEAISQGVDPQTVAGDFGKLSFYKMLGYFSLVGLLRVHSLLGDYYQAIKVLEPIEIHKKSAYSHIPACQISTSYYVGFAYMMMRRYADAIRTFSDILLYIQRTKQLYSTRSYQNDQINKQAEQMYHLLAICLVLHPQCIDESIQQVLREKNYHDAMFKMQCGDLEVFKSFFVFACPRFVSPCPPAVDAPMDDYVKDPMEHQLLVFMDEVRQQKDLPTTRSYLKLYTTLPLTKLASFIDPNASEDDVSKLLIRLLCFKHKMRNLVWSKGPSGLEGTFKSGSELDFYIDDDMIHIADTKVSHRYGDFFVRKILKFNDLNRKLKNINI.

A PCI domain is found at 306 to 514 (TFSDILLYIQ…IHIADTKVSH (209 aa)).

The protein belongs to the eIF-3 subunit L family. In terms of assembly, component of the eukaryotic translation initiation factor 3 (eIF-3) complex. The eIF-3 complex interacts with pix.

It is found in the cytoplasm. Component of the eukaryotic translation initiation factor 3 (eIF-3) complex, which is involved in protein synthesis of a specialized repertoire of mRNAs and, together with other initiation factors, stimulates binding of mRNA and methionyl-tRNAi to the 40S ribosome. The eIF-3 complex specifically targets and initiates translation of a subset of mRNAs involved in cell proliferation. The protein is Eukaryotic translation initiation factor 3 subunit L of Drosophila sechellia (Fruit fly).